A 456-amino-acid polypeptide reads, in one-letter code: Glycosyl hydrolase family 109 protein 2 (456 aa).

Residues Met1–Gly33 constitute a signal peptide (tat-type signal). Residues Glu63–Arg64, Asp85, Trp134–His137, Glu154–Val155, and Asn183 each bind NAD(+). Substrate-binding positions include Tyr212, Arg231, Tyr243–His246, and Tyr325. Residue Tyr243 participates in NAD(+) binding.

This sequence belongs to the Gfo/Idh/MocA family. Glycosyl hydrolase 109 subfamily. Requires NAD(+) as cofactor. Predicted to be exported by the Tat system. The position of the signal peptide cleavage has not been experimentally proven.

Functionally, glycosidase. In Shewanella sp. (strain ANA-3), this protein is Glycosyl hydrolase family 109 protein 2.